The following is a 638-amino-acid chain: uncharacterized protein (638 aa).

This is an uncharacterized protein from Bos taurus (Bovine).